The chain runs to 544 residues: Zinc finger protein 502 (544 aa).

K43 is covalently cross-linked (Glycyl lysine isopeptide (Lys-Gly) (interchain with G-Cter in SUMO2)). 14 consecutive C2H2-type zinc fingers follow at residues 155 to 177 (WKCN…QRTH), 183 to 205 (YTCE…QRIH), 211 to 233 (YGCE…QRIH), 239 to 261 (YKCN…QRIH), 267 to 289 (YKCN…QRIH), 295 to 317 (YICS…QRIH), 323 to 345 (HKCD…QRIH), 351 to 373 (YKCK…QRIH), 379 to 401 (YKCK…QRIH), 407 to 429 (YKCS…QRSH), 435 to 457 (YKCN…MRIH), 463 to 485 (YKCK…HRTH), 491 to 513 (YKCS…YRIH), and 519 to 541 (YECI…QKLH).

The protein belongs to the krueppel C2H2-type zinc-finger protein family. (Microbial infection) Interacts with human respiratory syncytial virus (HRSV) matrix protein; this interaction probably facilitates viral release.

The protein localises to the nucleus. In terms of biological role, may be involved in transcriptional regulation. In Homo sapiens (Human), this protein is Zinc finger protein 502 (ZNF502).